The chain runs to 300 residues: MNFQGLVLTDNCKNQWVVGPLIGKGGFGSIYTTNDNNYVVKIEPKANGSLFTEQAFYTRVLKPSVIEEWKKSHNIKHVGLITCKAFGLYKSINVEYRFLVINRLGVDLDAVIRANNNRLPKRSVMLIGIEILNTIQFMHEQGYSHGDIKASNIVLDQIDKNKLYLVDYGLVSKFMSNGEHVPFIRNPNKMDNGTLEFTPIDSHKGYVVSRRGDLETLGYCMIRWLGGILPWTKISETKNCALVSATKQKYVNNTATLLMTSLQYAPRELLQYITMVNSLTYFEEPNYDEFRHILMQGVYY.

The Protein kinase domain occupies 16 to 282; sequence WVVGPLIGKG…ITMVNSLTYF (267 aa). ATP contacts are provided by residues 22–30 and Lys45; that span reads IGKGGFGSI. Asp147 acts as the Proton acceptor in catalysis.

Belongs to the protein kinase superfamily. Ser/Thr protein kinase family. Poxviruses subfamily. Interacts with host JIP1; this interaction increases the amount of MAPK bound to JIP1 and subsequently increases the activity of transcription factors, such as JUN, that respond to these complexes. Interacts with protein OPG198; this interaction inhibits the repressive activity of OPG198 pseudokinase on viral replication factory formation. It depends on Mg(2+) as a cofactor. Autophosphorylated.

It is found in the virion. Its subcellular location is the host cytoplasm. The catalysed reaction is L-seryl-[protein] + ATP = O-phospho-L-seryl-[protein] + ADP + H(+). The enzyme catalyses L-threonyl-[protein] + ATP = O-phospho-L-threonyl-[protein] + ADP + H(+). Its function is as follows. Essential serine/threonine-protein kinase that plays different role in the viral life cycle. Phosphorylates the host small ribosomal protein RACK1 thereby customizing the ribosomes to a state optimal for viral mRNAs (which contain poly-A leaders) but not for host mRNAs. Facilitates viral DNA replication by inhibiting host BANF1, a cellular host defense responsive to foreign DNA. Phosphorylates host BANF1 on serine and threonine residues; this leads to BANF1 relocalization to the cytoplasm, loss of dimerization and impaired DNA binding activity. Indeed, BANF1 activity depends on its DNA-binding property which is blocked by VPK1-mediated phosphorylation. Required for viral intermediate genes expression, probably by inhibiting host BANF1. Modulates cellular responses via host JUN by two different mechanisms, either by direct phosphorylation or by modulation of upstream JIP1-MAPK complexes. Seems to participate in the accumulation/processing of late proteins and thus in virion maturation. In addition, inhibits B12 repressive activity on viral DNA replication via a phosphorylation-dependent mechanism. The protein is B1 kinase (OPG187) of Homo sapiens (Human).